Consider the following 268-residue polypeptide: GTP cyclohydrolase FolE2 (268 aa).

Belongs to the GTP cyclohydrolase IV family.

The enzyme catalyses GTP + H2O = 7,8-dihydroneopterin 3'-triphosphate + formate + H(+). Its pathway is cofactor biosynthesis; 7,8-dihydroneopterin triphosphate biosynthesis; 7,8-dihydroneopterin triphosphate from GTP: step 1/1. Functionally, converts GTP to 7,8-dihydroneopterin triphosphate. In Janthinobacterium sp. (strain Marseille) (Minibacterium massiliensis), this protein is GTP cyclohydrolase FolE2.